Reading from the N-terminus, the 299-residue chain is Taste receptor type 2 member 4 (299 aa).

Over 1–9 (MLRLFYFSA) the chain is Extracellular. A helical membrane pass occupies residues 10–30 (IIASVILNFVGIIMNLFITVV). At 31-46 (NCKTWVKSHRISSSDR) the chain is on the cytoplasmic side. A helical transmembrane segment spans residues 47 to 67 (ILFSLGITRFLMLGLFLVNTI). At 68–81 (YFVSSNTERSVYLS) the chain is on the extracellular side. Residues 82–102 (AFFVLCFMFLDSSSVWFVTLL) form a helical membrane-spanning segment. The Cytoplasmic segment spans residues 103-131 (NILYCVKITNFQHSVFLLLKRNISPKIPR). A helical transmembrane segment spans residues 132–152 (LLLACVLISAFTTCLYITLSQ). The Extracellular portion of the chain corresponds to 153–172 (ASPFPELVTTRNNTSFNISE). 3 N-linked (GlcNAc...) asparagine glycosylation sites follow: asparagine 164, asparagine 165, and asparagine 169. A helical membrane pass occupies residues 173 to 193 (GILSLVVSLVLSSSLQFIINV). Topologically, residues 194–230 (TSASLLIHSLRRHIQKMQKNATGFWNPQTEAHVGAMK) are cytoplasmic. The chain crosses the membrane as a helical span at residues 231–251 (LMVYFLILYIPYSVATLVQYL). Over 252 to 262 (PFYAGMDMGTK) the chain is Extracellular. The helical transmembrane segment at 263 to 283 (SICLIFATLYSPGHSVLIIIT) threads the bilayer. Residues 284–299 (HPKLKTTAKKILCFKK) are Cytoplasmic-facing.

Belongs to the G-protein coupled receptor T2R family. Expressed in subsets of taste receptor cells of the tongue and palate epithelium and exclusively in gustducin-positive cells. Expressed on airway ciliated epithelium.

The protein localises to the membrane. Its subcellular location is the cell projection. It localises to the cilium membrane. Functionally, gustducin-coupled receptor for denatonium and N(6)-propyl-2-thiouracil implicated in the perception of bitter compounds in the oral cavity and the gastrointestinal tract. Signals through PLCB2 and the calcium-regulated cation channel TRPM5. In airway epithelial cells, binding of denatonium increases the intracellular calcium ion concentration and stimulates ciliary beat frequency. This is Taste receptor type 2 member 4 (TAS2R4) from Homo sapiens (Human).